The chain runs to 190 residues: Potassium-transporting ATPase KdpC subunit (190 aa).

A helical membrane pass occupies residues Thr10–Gly30.

The protein belongs to the KdpC family. As to quaternary structure, the system is composed of three essential subunits: KdpA, KdpB and KdpC.

The protein resides in the cell inner membrane. In terms of biological role, part of the high-affinity ATP-driven potassium transport (or Kdp) system, which catalyzes the hydrolysis of ATP coupled with the electrogenic transport of potassium into the cytoplasm. This subunit acts as a catalytic chaperone that increases the ATP-binding affinity of the ATP-hydrolyzing subunit KdpB by the formation of a transient KdpB/KdpC/ATP ternary complex. This Escherichia fergusonii (strain ATCC 35469 / DSM 13698 / CCUG 18766 / IAM 14443 / JCM 21226 / LMG 7866 / NBRC 102419 / NCTC 12128 / CDC 0568-73) protein is Potassium-transporting ATPase KdpC subunit.